We begin with the raw amino-acid sequence, 351 residues long: UDP-3-O-acylglucosamine N-acyltransferase (351 aa).

His-240 (proton acceptor) is an active-site residue.

Belongs to the transferase hexapeptide repeat family. LpxD subfamily. Homotrimer.

It catalyses the reaction a UDP-3-O-[(3R)-3-hydroxyacyl]-alpha-D-glucosamine + a (3R)-hydroxyacyl-[ACP] = a UDP-2-N,3-O-bis[(3R)-3-hydroxyacyl]-alpha-D-glucosamine + holo-[ACP] + H(+). It functions in the pathway bacterial outer membrane biogenesis; LPS lipid A biosynthesis. Functionally, catalyzes the N-acylation of UDP-3-O-acylglucosamine using 3-hydroxyacyl-ACP as the acyl donor. Is involved in the biosynthesis of lipid A, a phosphorylated glycolipid that anchors the lipopolysaccharide to the outer membrane of the cell. This Pseudomonas syringae pv. syringae (strain B728a) protein is UDP-3-O-acylglucosamine N-acyltransferase.